The chain runs to 325 residues: Transcription initiation factor IIB 2 (325 aa).

The span at 1 to 13 (MSDSTIRTYSSDQ) shows a compositional bias: polar residues. The tract at residues 1-29 (MSDSTIRTYSSDQRQTDNDETVSTPDEDV) is disordered. The TFIIB-type zinc finger occupies 28-58 (DVLTCPECGGQVIDDEEHGESVCVDCGLVVE). Zn(2+) contacts are provided by cysteine 32, cysteine 35, cysteine 50, and cysteine 53. Residues 73–93 (STEKDEKSRVGAPTTNMMHDK) form a disordered region. A run of 2 repeats spans residues 144 to 227 (GEIE…VREL) and 238 to 319 (QYVP…ELLE).

This sequence belongs to the TFIIB family.

Stabilizes TBP binding to an archaeal box-A promoter. Also responsible for recruiting RNA polymerase II to the pre-initiation complex (DNA-TBP-TFIIB). The sequence is that of Transcription initiation factor IIB 2 from Halobacterium salinarum (strain ATCC 700922 / JCM 11081 / NRC-1) (Halobacterium halobium).